A 628-amino-acid chain; its full sequence is EF-hand calcium-binding domain-containing protein 7 (628 aa).

Positions 1-22 (MASNPGSDAALGTQNPLLSGSP) are enriched in polar residues. The disordered stretch occupies residues 1–24 (MASNPGSDAALGTQNPLLSGSPRT). EF-hand domains are found at residues 102-137 (TSKA…RGEK) and 138-173 (MTQE…TSEQ). The disordered stretch occupies residues 192–231 (QFGSHMEGSPERGPSPAPKPSPRVIRKNDQETFSSKGDTS). Residues serine 200 and serine 212 each carry the phosphoserine modification. Residues 222 to 231 (ETFSSKGDTS) are compositionally biased toward polar residues. One can recognise an EF-hand 3 domain in the interval 402–437 (EFRSTLSEIFEVIDLDGNGLISLEEYNFFELRTSGE). 4 residues coordinate Ca(2+): aspartate 415, aspartate 417, asparagine 419, and glutamate 426.

In terms of assembly, component of the EvC complex composed of EFCAB7, IQCE, EVC2 and EVC; built from two subcomplexes, EVC2:EVC and EFCAB7:IQCE. Interacts (via EF-hand 1 and 2) with IQCE (via N-terminus); this interaction anchors the EVC-EVC2 complex in a signaling microdomain at the base of cilia and stimulates the Hedgehog (Hh) pathway. Interacts with EVC2 (via N-terminal end). Interacts with EVC.

The protein resides in the cell projection. Its subcellular location is the cilium membrane. In terms of biological role, component of the EvC complex that positively regulates ciliary Hedgehog (Hh) signaling. Required for the localization of the EVC2:EVC subcomplex at the base of primary cilia. This is EF-hand calcium-binding domain-containing protein 7 (Efcab7) from Mus musculus (Mouse).